A 251-amino-acid chain; its full sequence is uncharacterized protein (251 aa).

Belongs to the FAM243 family.

This is an uncharacterized protein from Bos taurus (Bovine).